The following is a 110-amino-acid chain: T cell receptor alpha variable 39 (110 aa).

Residues 1-18 (MKKLLAMILWLQLDRLSG) form the signal peptide. Residues 19-110 (ELKVEQNPLF…LSATYFCAVD (92 aa)) enclose the Ig-like domain. 2 N-linked (GlcNAc...) asparagine glycosylation sites follow: N36 and N42. C41 and C107 are oxidised to a cystine.

Alpha-beta TR is a heterodimer composed of an alpha and beta chain; disulfide-linked. The alpha-beta TR is associated with the transmembrane signaling CD3 coreceptor proteins to form the TR-CD3 (TcR or TCR). The assembly of alpha-beta TR heterodimers with CD3 occurs in the endoplasmic reticulum where a single alpha-beta TR heterodimer associates with one CD3D-CD3E heterodimer, one CD3G-CD3E heterodimer and one CD247 homodimer forming a stable octameric structure. CD3D-CD3E and CD3G-CD3E heterodimers preferentially associate with TR alpha and TR beta chains, respectively. The association of the CD247 homodimer is the last step of TcR assembly in the endoplasmic reticulum and is required for transport to the cell surface.

Its subcellular location is the cell membrane. Functionally, v region of the variable domain of T cell receptor (TR) alpha chain that participates in the antigen recognition. Alpha-beta T cell receptors are antigen specific receptors which are essential to the immune response and are present on the cell surface of T lymphocytes. Recognize peptide-major histocompatibility (MH) (pMH) complexes that are displayed by antigen presenting cells (APC), a prerequisite for efficient T cell adaptive immunity against pathogens. Binding of alpha-beta TR to pMH complex initiates TR-CD3 clustering on the cell surface and intracellular activation of LCK that phosphorylates the ITAM motifs of CD3G, CD3D, CD3E and CD247 enabling the recruitment of ZAP70. In turn ZAP70 phosphorylates LAT, which recruits numerous signaling molecules to form the LAT signalosome. The LAT signalosome propagates signal branching to three major signaling pathways, the calcium, the mitogen-activated protein kinase (MAPK) kinase and the nuclear factor NF-kappa-B (NF-kB) pathways, leading to the mobilization of transcription factors that are critical for gene expression and essential for T cell growth and differentiation. The T cell repertoire is generated in the thymus, by V-(D)-J rearrangement. This repertoire is then shaped by intrathymic selection events to generate a peripheral T cell pool of self-MH restricted, non-autoaggressive T cells. Post-thymic interaction of alpha-beta TR with the pMH complexes shapes TR structural and functional avidity. This is T cell receptor alpha variable 39 from Homo sapiens (Human).